The sequence spans 285 residues: N(G),N(G)-dimethylarginine dimethylaminohydrolase 1 (285 aa).

An N-acetylalanine modification is found at Ala2. A substrate-binding site is contributed by Leu30. Ser33 is subject to Phosphoserine. Residues Asp73, Glu78, Asp79, Arg98, and Arg145 each coordinate substrate. Residue His173 is the Proton donor of the active site. Cys222 carries the post-translational modification S-nitrosocysteine. Position 268 (Val268) interacts with substrate. An S-nitrosocysteine modification is found at Cys274. The active-site Nucleophile is the Cys274. Cys274 lines the Zn(2+) pocket.

It belongs to the DDAH family. In terms of assembly, monomer. In terms of tissue distribution, detected in red blood cells (at protein level). Widely distributed, high amounts found in kidney, brain, aorta and pancreas.

The catalysed reaction is N(omega),N(omega)-dimethyl-L-arginine + H2O = dimethylamine + L-citrulline. It carries out the reaction N(omega)-methyl-L-arginine + H2O = L-citrulline + methylamine. Inhibited by zinc ions. In terms of biological role, hydrolyzes N(G),N(G)-dimethyl-L-arginine (ADMA) and N(G)-monomethyl-L-arginine (MMA) which act as inhibitors of NOS. Has therefore a role in the regulation of nitric oxide generation. The sequence is that of N(G),N(G)-dimethylarginine dimethylaminohydrolase 1 (Ddah1) from Rattus norvegicus (Rat).